The sequence spans 834 residues: Periplasmic nitrate reductase (834 aa).

Positions M1–A29 form a signal peptide, tat-type signal. The 57-residue stretch at L41–D97 folds into the 4Fe-4S Mo/W bis-MGD-type domain. [4Fe-4S] cluster contacts are provided by C48, C51, C55, and C83. Mo-bis(molybdopterin guanine dinucleotide)-binding positions include K85, Q152, N177, C181, W214–M221, S245–H249, Q264–D266, M375, Q379, N485, S511–D512, K534, D561, and T721–T730. F797 provides a ligand contact to substrate. Mo-bis(molybdopterin guanine dinucleotide) is bound by residues N805 and K822.

It belongs to the prokaryotic molybdopterin-containing oxidoreductase family. NasA/NapA/NarB subfamily. In terms of assembly, component of the periplasmic nitrate reductase NapAB complex composed of NapA and NapB. [4Fe-4S] cluster is required as a cofactor. Mo-bis(molybdopterin guanine dinucleotide) serves as cofactor. Predicted to be exported by the Tat system. The position of the signal peptide cleavage has not been experimentally proven.

The protein resides in the periplasm. The enzyme catalyses 2 Fe(II)-[cytochrome] + nitrate + 2 H(+) = 2 Fe(III)-[cytochrome] + nitrite + H2O. In terms of biological role, catalytic subunit of the periplasmic nitrate reductase complex NapAB. Receives electrons from NapB and catalyzes the reduction of nitrate to nitrite. The chain is Periplasmic nitrate reductase from Stutzerimonas stutzeri (Pseudomonas stutzeri).